The chain runs to 131 residues: UPF0102 protein YraN (131 aa).

Residues 1 to 19 (MATVPTRSGSPRQLTTKQT) are compositionally biased toward polar residues. Residues 1 to 21 (MATVPTRSGSPRQLTTKQTGD) form a disordered region.

It belongs to the UPF0102 family.

This Escherichia coli (strain K12 / MC4100 / BW2952) protein is UPF0102 protein YraN.